Here is a 124-residue protein sequence, read N- to C-terminus: Ribonuclease pancreatic (124 aa).

Substrate-binding residues include Lys-7 and Arg-10. His-12 acts as the Proton acceptor in catalysis. Intrachain disulfides connect Cys-26–Cys-84, Cys-40–Cys-95, Cys-58–Cys-110, and Cys-65–Cys-72. A glycan (N-linked (GlcNAc...) asparagine; partial) is linked at Asn-34. Residues 41-45, Lys-66, and Arg-85 contribute to the substrate site; that span reads KPVBT. His-119 functions as the Proton donor in the catalytic mechanism.

It belongs to the pancreatic ribonuclease family. In terms of assembly, monomer. Interacts with and forms tight 1:1 complexes with RNH1. Dimerization of two such complexes may occur. Interaction with RNH1 inhibits this protein. As to expression, pancreas.

It localises to the secreted. The catalysed reaction is an [RNA] containing cytidine + H2O = an [RNA]-3'-cytidine-3'-phosphate + a 5'-hydroxy-ribonucleotide-3'-[RNA].. It carries out the reaction an [RNA] containing uridine + H2O = an [RNA]-3'-uridine-3'-phosphate + a 5'-hydroxy-ribonucleotide-3'-[RNA].. Endonuclease that catalyzes the cleavage of RNA on the 3' side of pyrimidine nucleotides. Acts on single-stranded and double-stranded RNA. The polypeptide is Ribonuclease pancreatic (RNASE1) (Damaliscus korrigum (Topi)).